Here is a 218-residue protein sequence, read N- to C-terminus: Small ribosomal subunit protein uS3 (218 aa).

The 70-residue stretch at 40-109 folds into the KH type-2 domain; the sequence is IRKIINTEYS…DVSINIREVK (70 aa).

It belongs to the universal ribosomal protein uS3 family. As to quaternary structure, part of the 30S ribosomal subunit. Forms a tight complex with proteins S10 and S14.

Its function is as follows. Binds the lower part of the 30S subunit head. Binds mRNA in the 70S ribosome, positioning it for translation. The polypeptide is Small ribosomal subunit protein uS3 (Orientia tsutsugamushi (strain Boryong) (Rickettsia tsutsugamushi)).